A 262-amino-acid polypeptide reads, in one-letter code: Putative 1-acyl-sn-glycerol-3-phosphate acyltransferase acl-1 (262 aa).

Helical transmembrane passes span 3–23 (FLAILFVIAVLLLLAQLPVIG), 29–49 (VYFGMCLIIGGFLGGLASIPF), and 89–109 (IIIANHQSALDVLGMSFAWPV). The short motif at 94–99 (HQSALD) is the HXXXXD motif element.

It belongs to the 1-acyl-sn-glycerol-3-phosphate acyltransferase family.

The protein localises to the membrane. The enzyme catalyses a 1-acyl-sn-glycero-3-phosphate + an acyl-CoA = a 1,2-diacyl-sn-glycero-3-phosphate + CoA. It participates in phospholipid metabolism; CDP-diacylglycerol biosynthesis; CDP-diacylglycerol from sn-glycerol 3-phosphate: step 2/3. Converts lysophosphatidic acid (LPA) into phosphatidic acid by incorporating an acyl moiety at the sn-2 position of the glycerol backbone. In Caenorhabditis elegans, this protein is Putative 1-acyl-sn-glycerol-3-phosphate acyltransferase acl-1 (acl-1).